The chain runs to 128 residues: Small ribosomal subunit protein uS11 (128 aa).

Belongs to the universal ribosomal protein uS11 family. In terms of assembly, part of the 30S ribosomal subunit. Interacts with proteins S7 and S18. Binds to IF-3.

Located on the platform of the 30S subunit, it bridges several disparate RNA helices of the 16S rRNA. Forms part of the Shine-Dalgarno cleft in the 70S ribosome. In Leuconostoc mesenteroides subsp. mesenteroides (strain ATCC 8293 / DSM 20343 / BCRC 11652 / CCM 1803 / JCM 6124 / NCDO 523 / NBRC 100496 / NCIMB 8023 / NCTC 12954 / NRRL B-1118 / 37Y), this protein is Small ribosomal subunit protein uS11.